The chain runs to 136 residues: Small ribosomal subunit protein uS12 (136 aa).

Aspartate 89 carries the 3-methylthioaspartic acid modification. A disordered region spans residues 104 to 136 (TAGVNGRTQRRSKYGAKRPKPGQAAAAAKGKKK). A compositionally biased stretch (basic residues) spans 111-123 (TQRRSKYGAKRPK). The span at 124 to 136 (PGQAAAAAKGKKK) shows a compositional bias: low complexity.

It belongs to the universal ribosomal protein uS12 family. Part of the 30S ribosomal subunit. Contacts proteins S8 and S17. May interact with IF1 in the 30S initiation complex.

With S4 and S5 plays an important role in translational accuracy. Functionally, interacts with and stabilizes bases of the 16S rRNA that are involved in tRNA selection in the A site and with the mRNA backbone. Located at the interface of the 30S and 50S subunits, it traverses the body of the 30S subunit contacting proteins on the other side and probably holding the rRNA structure together. The combined cluster of proteins S8, S12 and S17 appears to hold together the shoulder and platform of the 30S subunit. This Parabacteroides distasonis (strain ATCC 8503 / DSM 20701 / CIP 104284 / JCM 5825 / NCTC 11152) protein is Small ribosomal subunit protein uS12.